The primary structure comprises 25 residues: Germin-like protein (25 aa).

Belongs to the germin family. In terms of assembly, oligomer (believed to be a pentamer but probably hexamer). The three different mass spectrometry results appear to arise from different glycosylation variants.

It localises to the secreted. The protein resides in the extracellular space. Its subcellular location is the apoplast. Functionally, may play a role in plant defense. Probably has no oxalate oxidase activity even if the active site is conserved. The chain is Germin-like protein from Citrus sinensis (Sweet orange).